A 378-amino-acid chain; its full sequence is Zinc finger protein DPF3 (378 aa).

Residue Lys-99 forms a Glycyl lysine isopeptide (Lys-Gly) (interchain with G-Cter in SUMO2) linkage. The interval 146–193 (LENDENVEEGNEEEDLEEDVPKRKNRTRGRARGSAGGRRRHDAASQED) is disordered. The span at 148–163 (NDENVEEGNEEEDLEE) shows a compositional bias: acidic residues. A compositionally biased stretch (basic residues) spans 168-186 (RKNRTRGRARGSAGGRRRH). The C2H2-type zinc-finger motif lies at 198-221 (YVCDICGKRYKNRPGLSYHYAHTH). A disordered region spans residues 225–254 (EEGDEAQDQETRSPPNHRNENHRPQKGPDG). 2 PHD-type zinc fingers span residues 259–319 (NNYC…CKSC) and 316–366 (CKSC…CWEL). The interval 317-332 (KSCILCGTSENDDQLL) is interaction with HDGFL2. A Phosphoserine modification is found at Gly-323.

The protein belongs to the requiem/DPF family. In terms of assembly, component of the BAF complex, which includes at least actin (ACTB), ARID1A, ARID1B/BAF250, SMARCA2, SMARCA4/BRG1/BAF190A, ACTL6A/BAF53, ACTL6B/BAF53B, SMARCE1/BAF57, SMARCC1/BAF155, SMARCC2/BAF170, SMARCB1/SNF5/INI1, and one or more of SMARCD1/BAF60A, SMARCD2/BAF60B, or SMARCD3/BAF60C. In muscle cells, the BAF complex also contains DPF3. Interacts with acetylated histones H3 and H4. Component of neuron-specific chromatin remodeling complex (nBAF complex) composed of at least, ARID1A/BAF250A or ARID1B/BAF250B, SMARCD1/BAF60A, SMARCD3/BAF60C, SMARCA2/BRM/BAF190B, SMARCA4/BRG1/BAF190A, SMARCB1/BAF47, SMARCC1/BAF155, SMARCE1/BAF57, SMARCC2/BAF170, DPF1/BAF45B, DPF3/BAF45C, ACTL6B/BAF53B and actin. As to quaternary structure, interacts with HDGFL2. Interacts with SMARCA4/BRG1/BAF190A, SMARCC1/BAF155 and SMARCD1/BAF60A. In terms of tissue distribution, expressed in the heart and somites. Expressed in cerebellum and spinal cord, but not in cerebral cortex. Expressed specifically in post-mitotic neurons (at protein level).

Its subcellular location is the nucleus. In terms of biological role, muscle-specific component of the BAF complex, a multiprotein complex involved in transcriptional activation and repression of select genes by chromatin remodeling (alteration of DNA-nucleosome topology). Specifically binds acetylated lysines on histone 3 and 4 (H3K14ac, H3K9ac, H4K5ac, H4K8ac, H4K12ac, H4K16ac). In the complex, it acts as a tissue-specific anchor between histone acetylations and methylations and chromatin remodeling. It thereby probably plays an essential role in heart and skeletal muscle development. Belongs to the neuron-specific chromatin remodeling complex (nBAF complex). During neural development a switch from a stem/progenitor to a post-mitotic chromatin remodeling mechanism occurs as neurons exit the cell cycle and become committed to their adult state. The transition from proliferating neural stem/progenitor cells to post-mitotic neurons requires a switch in subunit composition of the npBAF and nBAF complexes. As neural progenitors exit mitosis and differentiate into neurons, npBAF complexes which contain ACTL6A/BAF53A and PHF10/BAF45A, are exchanged for homologous alternative ACTL6B/BAF53B and DPF1/BAF45B or DPF3/BAF45C subunits in neuron-specific complexes (nBAF). The npBAF complex is essential for the self-renewal/proliferative capacity of the multipotent neural stem cells. The nBAF complex along with CREST plays a role regulating the activity of genes essential for dendrite growth. Its function is as follows. Acts as a regulator of myogenesis in cooperation with HDGFL2. Mediates the interaction of HDGFL2 with the BAF complex. HDGFL2-DPF3a activate myogenic genes by increasing chromatin accessibility through recruitment of SMARCA4/BRG1/BAF190A (ATPase subunit of the BAF complex) to myogenic gene promoters. The polypeptide is Zinc finger protein DPF3 (Dpf3) (Mus musculus (Mouse)).